The chain runs to 151 residues: MLP-like protein 329 (151 aa).

Belongs to the MLP family.

The chain is MLP-like protein 329 (MLP329) from Arabidopsis thaliana (Mouse-ear cress).